The following is a 373-amino-acid chain: Chorismate synthase (373 aa).

2 residues coordinate NADP(+): Arg-48 and Arg-54. FMN-binding positions include 125-127 (RSS), 248-249 (NA), Gly-288, 303-307 (KPTSS), and Arg-329.

The protein belongs to the chorismate synthase family. Homotetramer. FMNH2 serves as cofactor.

It carries out the reaction 5-O-(1-carboxyvinyl)-3-phosphoshikimate = chorismate + phosphate. The protein operates within metabolic intermediate biosynthesis; chorismate biosynthesis; chorismate from D-erythrose 4-phosphate and phosphoenolpyruvate: step 7/7. In terms of biological role, catalyzes the anti-1,4-elimination of the C-3 phosphate and the C-6 proR hydrogen from 5-enolpyruvylshikimate-3-phosphate (EPSP) to yield chorismate, which is the branch point compound that serves as the starting substrate for the three terminal pathways of aromatic amino acid biosynthesis. This reaction introduces a second double bond into the aromatic ring system. The chain is Chorismate synthase from Colwellia psychrerythraea (strain 34H / ATCC BAA-681) (Vibrio psychroerythus).